Here is an 87-residue protein sequence, read N- to C-terminus: Putative autophagy-related protein 8E (87 aa).

The span at 1 to 14 (MEERRKEKGKEGRR) shows a compositional bias: basic and acidic residues. The tract at residues 1–30 (MEERRKEKGKEGRRGKATGHSVDKFSRSNL) is disordered. Gly-87 carries the Phosphatidylethanolamine amidated glycine lipid modification.

It belongs to the ATG8 family. In terms of assembly, interacts with ATG4. The C-terminal Gly is amidated with phosphatidylethanolamine by an activating system similar to that for ubiquitin.

It is found in the cytoplasmic vesicle. The protein localises to the autophagosome membrane. The protein resides in the vacuole membrane. Its subcellular location is the cytoplasm. It localises to the cytoskeleton. Its function is as follows. Ubiquitin-like modifier involved in autophagosomes formation. May mediate the delivery of the autophagosomes to the vacuole via the microtubule cytoskeleton. This is Putative autophagy-related protein 8E (ATG8E) from Oryza sativa subsp. japonica (Rice).